The primary structure comprises 344 residues: Secreted LysM effector LysM2 (344 aa).

The first 24 residues, 1–24 (MMAPKSLQTGLLILLLAKLKLAWG), serve as a signal peptide directing secretion. A LysM 1 domain is found at 36–80 (YEAAASSGDTCTSFAAEWGLTEETFASLNPSAACPSLVAGQNYCM). A compositionally biased stretch (low complexity) spans 88–134 (STTSSSSSTTSSSTTSSSTTSSSTTSSSTTTSSFTTTTASETTSTAA). Residues 88 to 141 (STTSSSSSTTSSSTTSSSTTSSSTTSSSTTTSSFTTTTASETTSTAANGVTTPM) form a disordered region. LysM domains lie at 153 to 199 (KFDL…YVCV), 216 to 262 (KFDL…YVCV), and 296 to 342 (KFWL…YICV).

It belongs to the secreted LysM effector family.

Its function is as follows. Might have a role in sequestration of chitin oligosaccharides (breakdown products of fungal cell walls that are released during invasion and act as triggers of host immunity) to dampen host defense. In Penicillium expansum (Blue mold rot fungus), this protein is Secreted LysM effector LysM2.